The chain runs to 356 residues: Transcription factor ATOH1 (356 aa).

A compositionally biased stretch (basic and acidic residues) spans 1–21 (MSRLLHAEEWAEVKELGDHHR). Disordered regions lie at residues 1–56 (MSRL…PELS) and 92–125 (SEAAAPRDEVDGRGELVRRSSGGASSSKSPGPVK). The segment covering 26–40 (HHLPQPPPPPPPQPP) has biased composition (pro residues). A compositionally biased stretch (basic and acidic residues) spans 96–109 (APRDEVDGRGELVR). The span at 110–124 (RSSGGASSSKSPGPV) shows a compositional bias: low complexity. Residues 161 to 213 (QRRLAANARERRRMHGLNHAFDQLRNVIPSFNNDKKLSKYETLQMAQIYINAL) form the bHLH domain. Disordered stretches follow at residues 218–279 (QTPS…TRFS) and 314–356 (SPSL…DEAS). A compositionally biased stretch (low complexity) spans 252-266 (NATAAGAQQASGGSQ). Residues 337–356 (HRSDGEFSPHSHYSDSDEAS) are compositionally biased toward basic and acidic residues.

Efficient DNA binding requires dimerization with another bHLH protein.

Its subcellular location is the nucleus. Transcriptional regulator. Activates E box-dependent transcription in collaboration with TCF3/E47, but the activity is completely antagonized by the negative regulator of neurogenesis HES1. Plays a role in the differentiation of subsets of neural cells by activating E box-dependent transcription. The polypeptide is Transcription factor ATOH1 (Pan troglodytes (Chimpanzee)).